A 1918-amino-acid polypeptide reads, in one-letter code: Diacylglycerol kinase eta (1918 aa).

A compositionally biased stretch (basic and acidic residues) spans 1 to 10 (MAHLKLDTLH). Positions 1 to 37 (MAHLKLDTLHVQRSPRGSRRSSPSSGRSSACSSGSIS) are disordered. Low complexity predominate over residues 20–37 (RSSPSSGRSSACSSGSIS). A PH domain is found at 82 to 175 (AIIKEGFLLK…WLGGLKTATA (94 aa)). 2 consecutive Phorbol-ester/DAG-type zinc fingers follow at residues 195–245 (HHHW…IANC) and 268–319 (PHQW…AVAC). A DAGKc domain is found at 350-486 (GNFSPLLVFV…DRWSIMVFEK (137 aa)). Disordered stretches follow at residues 783–805 (GANI…NTPT), 1017–1067 (TTLC…DDNP), 1177–1212 (PNTI…GDSI), and 1380–1399 (ERDK…TEEA). Over residues 1177–1189 (PNTILTTSTSPTK) the composition is skewed to polar residues. Positions 1855 to 1918 (WSVNEVVTWL…LQAIKDLSEN (64 aa)) constitute an SAM domain.

Belongs to the eukaryotic diacylglycerol kinase family.

It localises to the cytoplasm. The catalysed reaction is a 1,2-diacyl-sn-glycerol + ATP = a 1,2-diacyl-sn-glycero-3-phosphate + ADP + H(+). Phosphorylates diacylglycerol (DAG) to generate phosphatidic acid (PA). The sequence is that of Diacylglycerol kinase eta from Drosophila erecta (Fruit fly).